We begin with the raw amino-acid sequence, 70 residues long: Gas vesicle protein A (70 aa).

The protein belongs to the gas vesicle GvpA family. As to quaternary structure, the gas vesicle shell is 2 nm thick and consists of a single layer of this protein. It forms helical ribs nearly perpendicular to the long axis of the vesicle.

It localises to the gas vesicle shell. Its function is as follows. Gas vesicles are hollow, gas filled proteinaceous nanostructures found in some microorganisms. During planktonic growth they allow positioning of the organism at a favorable depth for light or nutrient acquisition. GvpA forms the protein shell. This chain is Gas vesicle protein A, found in Bradyrhizobium sp. (strain ORS 278).